Consider the following 381-residue polypeptide: Protein COS6 (381 aa).

Topologically, residues 1 to 42 (MKENELKNEKSVDVLSVKQLESQKTVLPQDLFRSSFTWFCYE) are cytoplasmic. A helical transmembrane segment spans residues 43–63 (IYKSLVFRIWMLLWLPLSVWW). The Extracellular segment spans residues 64-69 (KLSNNW). Residues 70-90 (IYPLMVSLLVLFWGPVFVLVI) traverse the membrane as a helical segment. Topologically, residues 91-381 (FRLSRKRSLS…QLSCSEESLA (291 aa)) are cytoplasmic.

This sequence belongs to the DUP/COS family.

The protein localises to the membrane. The polypeptide is Protein COS6 (COS6) (Saccharomyces cerevisiae (strain ATCC 204508 / S288c) (Baker's yeast)).